Consider the following 241-residue polypeptide: Probable 2-phosphosulfolactate phosphatase (241 aa).

It belongs to the ComB family. The cofactor is Mg(2+).

It carries out the reaction (2R)-O-phospho-3-sulfolactate + H2O = (2R)-3-sulfolactate + phosphate. This Deinococcus geothermalis (strain DSM 11300 / CIP 105573 / AG-3a) protein is Probable 2-phosphosulfolactate phosphatase.